A 118-amino-acid chain; its full sequence is Small ribosomal subunit protein uS13 (118 aa).

Residues 91 to 118 form a disordered region; it reads HRRGLPVRGQRTKTNARTRKGPRKPIKK.

It belongs to the universal ribosomal protein uS13 family. As to quaternary structure, part of the 30S ribosomal subunit. Forms a loose heterodimer with protein S19. Forms two bridges to the 50S subunit in the 70S ribosome.

Functionally, located at the top of the head of the 30S subunit, it contacts several helices of the 16S rRNA. In the 70S ribosome it contacts the 23S rRNA (bridge B1a) and protein L5 of the 50S subunit (bridge B1b), connecting the 2 subunits; these bridges are implicated in subunit movement. Contacts the tRNAs in the A and P-sites. This chain is Small ribosomal subunit protein uS13, found in Serratia proteamaculans (strain 568).